Here is a 633-residue protein sequence, read N- to C-terminus: Cyclic GMP-AMP synthase-like receptor 1 (633 aa).

Disordered regions lie at residues Lys23–Thr80, Phe107–Phe214, and Arg250–Ser276. Residues Lys29–Thr67 are compositionally biased toward basic and acidic residues. Polar residues predominate over residues His68–Thr80. Composition is skewed to basic and acidic residues over residues Arg125 to Thr143, Arg176 to Thr194, and Arg250 to Pro274. Residues Glu353, Asp355, and Asp455 each contribute to the Mg(2+) site.

This sequence belongs to the mab-21 family. It depends on Mg(2+) as a cofactor. Requires Mn(2+) as cofactor.

It catalyses the reaction UTP + ATP = 2',3'-cUAMP + 2 diphosphate. Its function is as follows. Nucleotidyltransferase that catalyzes the formation of cyclic UMP-AMP (2',3'-cUAMP) from ATP and UTP and plays a key role in innate immunity. Acts as a key sensor of double-stranded DNA (dsDNA), the presence of dsDNA in the cytoplasm being a danger signal that triggers the immune responses. Directly binds dsDNA, activating the nucleotidyltransferase activity, leading to synthesis of 2',3'-cUAMP, a second messenger that binds to and activates Sting, thereby triggering the immune response via activation of the NF-kappa-B transcription factor. The chain is Cyclic GMP-AMP synthase-like receptor 1 from Crassostrea virginica (Eastern oyster).